A 509-amino-acid polypeptide reads, in one-letter code: Aldehyde dehydrogenase 1A1 (509 aa).

NAD(+)-binding positions include 175-178 (IPWN), 201-204 (KPAE), 234-235 (GP), 254-255 (GS), and 277-279 (ELG). Glu277 serves as the catalytic Proton acceptor. The active-site Nucleophile is Cys311. NAD(+)-binding positions include 357–361 (EQFQK) and 408–410 (EIF).

The protein belongs to the aldehyde dehydrogenase family. Homotetramer.

Its subcellular location is the cytoplasm. It localises to the cytosol. It is found in the cell projection. The protein resides in the axon. The catalysed reaction is an aldehyde + NAD(+) + H2O = a carboxylate + NADH + 2 H(+). It carries out the reaction all-trans-retinal + NAD(+) + H2O = all-trans-retinoate + NADH + 2 H(+). The enzyme catalyses 9-cis-retinal + NAD(+) + H2O = 9-cis-retinoate + NADH + 2 H(+). It catalyses the reaction 11-cis-retinal + NAD(+) + H2O = 11-cis-retinoate + NADH + 2 H(+). The catalysed reaction is 13-cis-retinal + NAD(+) + H2O = 13-cis-retinoate + NADH + 2 H(+). It carries out the reaction 3-deoxyglucosone + NAD(+) + H2O = 2-dehydro-3-deoxy-D-gluconate + NADH + 2 H(+). The enzyme catalyses (E)-4-hydroxynon-2-enal + NAD(+) + H2O = (E)-4-hydroxynon-2-enoate + NADH + 2 H(+). It catalyses the reaction malonaldehyde + NAD(+) + H2O = 3-oxopropanoate + NADH + 2 H(+). The catalysed reaction is hexanal + NAD(+) + H2O = hexanoate + NADH + 2 H(+). It carries out the reaction propanal + NAD(+) + H2O = propanoate + NADH + 2 H(+). The enzyme catalyses acetaldehyde + NAD(+) + H2O = acetate + NADH + 2 H(+). It catalyses the reaction benzaldehyde + NAD(+) + H2O = benzoate + NADH + 2 H(+). The catalysed reaction is 4-aminobutanal + NAD(+) + H2O = 4-aminobutanoate + NADH + 2 H(+). The protein operates within cofactor metabolism; retinol metabolism. Cytosolic dehydrogenase that catalyzes the irreversible oxidation of a wide range of aldehydes to their corresponding carboxylic acid. Functions downstream of retinol dehydrogenases and catalyzes the oxidation of retinaldehyde into retinoic acid, the second step in the oxidation of retinol/vitamin A into retinoic acid. This pathway is crucial to control the levels of retinol and retinoic acid, two important molecules which excess can be teratogenic and cytotoxic. Also oxidizes aldehydes resulting from lipid peroxidation like (E)-4-hydroxynon-2-enal/HNE, malonaldehyde and hexanal that form protein adducts and are highly cytotoxic. By participating for instance to the clearance of (E)-4-hydroxynon-2-enal/HNE in the lens epithelium prevents the formation of HNE-protein adducts and lens opacification. Also functions downstream of fructosamine-3-kinase in the fructosamine degradation pathway by catalyzing the oxidation of 3-deoxyglucosone, the carbohydrate product of fructosamine 3-phosphate decomposition, which is itself a potent glycating agent that may react with lysine and arginine side-chains of proteins. Also has an aminobutyraldehyde dehydrogenase activity and is probably part of an alternative pathway for the biosynthesis of GABA/4-aminobutanoate in midbrain, thereby playing a role in GABAergic synaptic transmission. The protein is Aldehyde dehydrogenase 1A1 of Gallus gallus (Chicken).